A 438-amino-acid chain; its full sequence is GTPase Der (438 aa).

2 consecutive EngA-type G domains span residues proline 4–serine 168 and threonine 177–serine 352. Residues glycine 10–serine 17, aspartate 57–leucine 61, asparagine 120–aspartate 123, glycine 183–serine 190, aspartate 230–leucine 234, and asparagine 295–aspartate 298 contribute to the GTP site. The KH-like domain maps to methionine 353–glycine 437.

It belongs to the TRAFAC class TrmE-Era-EngA-EngB-Septin-like GTPase superfamily. EngA (Der) GTPase family. In terms of assembly, associates with the 50S ribosomal subunit.

Functionally, GTPase that plays an essential role in the late steps of ribosome biogenesis. The sequence is that of GTPase Der from Finegoldia magna (strain ATCC 29328 / DSM 20472 / WAL 2508) (Peptostreptococcus magnus).